The sequence spans 278 residues: uncharacterized protein (278 aa).

It belongs to the manganese catalase family.

This is an uncharacterized protein from Bacillus subtilis (strain 168).